Consider the following 276-residue polypeptide: Glucosamine-6-phosphate deaminase 2 (276 aa).

Asp-72 (proton acceptor; for enolization step) is an active-site residue. Positions 106–130 (ILDGNATDLQAECDAFEKKIKEAGG) form a coiled coil. Residue Asp-141 is the For ring-opening step of the active site. His-143 (proton acceptor; for ring-opening step) is an active-site residue. Catalysis depends on Glu-148, which acts as the For ring-opening step. A Phosphothreonine modification is found at Thr-161.

This sequence belongs to the glucosamine/galactosamine-6-phosphate isomerase family. In terms of assembly, homohexamer.

The protein localises to the cytoplasm. It carries out the reaction alpha-D-glucosamine 6-phosphate + H2O = beta-D-fructose 6-phosphate + NH4(+). It participates in nucleotide-sugar biosynthesis; UDP-N-acetyl-alpha-D-glucosamine biosynthesis; alpha-D-glucosamine 6-phosphate from D-fructose 6-phosphate: step 1/1. Allosterically activated by N-acetylglucosamine-6-phosphate (GlcNAc6P). In terms of biological role, catalyzes the reversible conversion of alpha-D-glucosamine 6-phosphate (GlcN-6P) into beta-D-fructose 6-phosphate (Fru-6P) and ammonium ion, a regulatory reaction step in de novo uridine diphosphate-N-acetyl-alpha-D-glucosamine (UDP-GlcNAc) biosynthesis via hexosamine pathway. Deamination is coupled to aldo-keto isomerization mediating the metabolic flux from UDP-GlcNAc toward Fru-6P. At high ammonium level can drive amination and isomerization of Fru-6P toward hexosamines and UDP-GlcNAc synthesis. Has a role in fine tuning the metabolic fluctuations of cytosolic UDP-GlcNAc and their effects on hyaluronan synthesis that occur during tissue remodeling. The chain is Glucosamine-6-phosphate deaminase 2 from Bos taurus (Bovine).